Here is a 237-residue protein sequence, read N- to C-terminus: Phosphoribosylaminoimidazole-succinocarboxamide synthase (237 aa).

It belongs to the SAICAR synthetase family.

The catalysed reaction is 5-amino-1-(5-phospho-D-ribosyl)imidazole-4-carboxylate + L-aspartate + ATP = (2S)-2-[5-amino-1-(5-phospho-beta-D-ribosyl)imidazole-4-carboxamido]succinate + ADP + phosphate + 2 H(+). It functions in the pathway purine metabolism; IMP biosynthesis via de novo pathway; 5-amino-1-(5-phospho-D-ribosyl)imidazole-4-carboxamide from 5-amino-1-(5-phospho-D-ribosyl)imidazole-4-carboxylate: step 1/2. The protein is Phosphoribosylaminoimidazole-succinocarboxamide synthase of Photorhabdus laumondii subsp. laumondii (strain DSM 15139 / CIP 105565 / TT01) (Photorhabdus luminescens subsp. laumondii).